The primary structure comprises 152 residues: Ninjurin-1 (152 aa).

At M1 the chain carries N-acetylmethionine. The segment covering 1-10 (MESGTEEYEL) has biased composition (acidic residues). The tract at residues 1–29 (MESGTEEYELNGDLRPGSPGSPDALPPRW) is disordered. At 1–78 (MESGTEEYEL…EQGNDFAFFV (78 aa)) the chain is on the extracellular side. S18 and S21 each carry phosphoserine. An N-terminal adhesion motif region spans residues 26–37 (PPRWGLRNRPIN). Residues 40 to 69 (HYANKKSAAESMLDIALLMANASQLKAVVE) are required to induce plasma membrane rupture. The segment at 44 to 55 (KKSAAESMLDIA) is helix alpha1. Positions 58–74 (MANASQLKAVVEQGNDF) are helix alpha2. A glycan (N-linked (GlcNAc...) asparagine) is linked at N60. Residues 79-103 (PLVVLISISLVLQIGVGVLLIFLVK) form a helical membrane-spanning segment. The Cytoplasmic portion of the chain corresponds to 104–113 (YDLNNPAKHA). A helical transmembrane segment spans residues 114–138 (KLDFLNNLATGLVFIIVVVNIFITA). Topologically, residues 139 to 152 (FGVQKPVMDVAPRQ) are extracellular.

This sequence belongs to the ninjurin family. In terms of assembly, homodimer; in absence of death stimuli, forms an inactive homodimer. Homooligomer; in response to death stimuli, homooligomerizes into long, highly branched filaments and large, ring-shaped structures in the membrane. Cleaved by MMP9 protease to generate the Secreted ninjurin-1 form. Post-translationally, N-linked glycosylation is required for homooligomerization.

It is found in the cell membrane. The protein localises to the synaptic cell membrane. It localises to the secreted. Its activity is regulated as follows. In response to death stimuli, homooligomerizes and disrupts membrane integrity by introducing the hydrophilic faces of alpha1 and alpha2 helices into the hydrophobic membrane. Homooligomerization and ability to mediate plasma membrane rupture is inhibited by glycine; it is unclear whether glycine directly or indirectly inhibits homooligomerization. In normal conditions, NINJ1 is autoinhibited via formation of a homodimer: in the inactive homodimer, the alpha1 and alpha2 helices (residues 44-74) form a single transmembrane region without a kink, in which hydrophilic faces of alpha1 and alpha2 helices are sequestered. Effector of various programmed cell death, such as pyroptosis and necroptosis, which mediates plasma membrane rupture (cytolysis). Oligomerizes in response to death stimuli and forms ring-like structures on the plasma membrane: acts by cutting and shedding membrane disks, like a cookie cutter, leading to membrane damage and loss that cannot be repaired by the cell. Plasma membrane rupture leads to release intracellular molecules named damage-associated molecular patterns (DAMPs) that propagate the inflammatory response. Mechanistically, mediates plasma membrane rupture by introducing hydrophilic faces of 2 alpha helices into the hydrophobic membrane. Induces plasma membrane rupture downstream of Gasdermin (GSDMA, GSDMB, GSDMC, GSDMD, or GSDME) or MLKL during pyroptosis or necroptosis, respectively. Acts as an effector of PANoptosis downstream of CASP1, CASP4, CASP8 and RIPK3. Also induces plasma membrane rupture in response to cell swelling caused by osmotic stress and ferroptosis downstream of lipid peroxidation. Acts as a regulator of Toll-like receptor 4 (TLR4) signaling triggered by lipopolysaccharide (LPS) during systemic inflammation; directly binds LPS. Involved in leukocyte migration during inflammation by promoting transendothelial migration of macrophages via homotypic binding. Promotes the migration of monocytes across the brain endothelium to central nervous system inflammatory lesions. Also acts as a homophilic transmembrane adhesion molecule involved in various processes such as axonal growth, cell chemotaxis and angiogenesis. Promotes cell adhesion by mediating homophilic interactions via its extracellular N-terminal adhesion motif (N-NAM). Involved in the progression of the inflammatory stress by promoting cell-to-cell interactions between immune cells and endothelial cells. Plays a role in nerve regeneration by promoting maturation of Schwann cells. Acts as a regulator of angiogenesis. Promotes the formation of new vessels by mediating the interaction between capillary pericyte cells and endothelial cells. Also mediates vascular functions in penile tissue as well as vascular formation. Promotes osteoclasts development by enhancing the survival of prefusion osteoclasts. Also involved in striated muscle growth and differentiation. Also involved in cell senescence in a p53/TP53 manner, possibly by acting as an indirect regulator of p53/TP53 mRNA translation. In terms of biological role, secreted form generated by cleavage, which has chemotactic activity. Acts as an anti-inflammatory mediator by promoting monocyte recruitment, thereby ameliorating atherosclerosis. The polypeptide is Ninjurin-1 (Mus musculus (Mouse)).